We begin with the raw amino-acid sequence, 315 residues long: Glycerol-3-phosphate dehydrogenase [NAD(P)+] (315 aa).

NADPH contacts are provided by Trp-24, Arg-44, Arg-45, and Lys-92. 2 residues coordinate sn-glycerol 3-phosphate: Lys-92 and Gly-120. Ser-124 lines the NADPH pocket. The sn-glycerol 3-phosphate site is built by Lys-175, Asp-228, Ser-238, Arg-239, and Asn-240. Residue Lys-175 is the Proton acceptor of the active site. NADPH is bound at residue Arg-239. Glu-265 provides a ligand contact to NADPH.

This sequence belongs to the NAD-dependent glycerol-3-phosphate dehydrogenase family.

The protein resides in the cytoplasm. It catalyses the reaction sn-glycerol 3-phosphate + NAD(+) = dihydroxyacetone phosphate + NADH + H(+). The enzyme catalyses sn-glycerol 3-phosphate + NADP(+) = dihydroxyacetone phosphate + NADPH + H(+). It participates in membrane lipid metabolism; glycerophospholipid metabolism. Its function is as follows. Catalyzes the reduction of the glycolytic intermediate dihydroxyacetone phosphate (DHAP) to sn-glycerol 3-phosphate (G3P), the key precursor for phospholipid synthesis. This Synechococcus sp. (strain JA-2-3B'a(2-13)) (Cyanobacteria bacterium Yellowstone B-Prime) protein is Glycerol-3-phosphate dehydrogenase [NAD(P)+].